Reading from the N-terminus, the 332-residue chain is MKTLGEFIVEKQHEFSHATGELTALLSAIKLGAKIIHRDINKAGLVDILGASGAENVQGEVQQKLDLFANEKLKAALRARDIVAGIASEEEDEIVVFEGCEHAKYVVLMDPLDGSSNIDVNVSVGTIFSIYRRVTPVGTPVTEEDFLQPGNRQVAAGYVVYGSSTMLVYTTGCGVHAFTYDPSLGVFCLCQERMRFPEKGNTYSINEGNYIKFPQGVKKYIKYCQEEDKETQRPYTSRYIGSLVADFHRNLLKGGIYLYPSTASHPDGKLRLLYECNPMAFLAEQAGGKASDGKERILDIIPESLHQRRSFFVGNNHMVEDVENFIKAFPDA.

4 residues coordinate Mg(2+): glutamate 89, aspartate 110, leucine 112, and aspartate 113. Substrate-binding positions include 113–116 (DGSS), asparagine 206, tyrosine 239, 257–259 (YLY), and lysine 269. Glutamate 275 serves as a coordination point for Mg(2+).

Belongs to the FBPase class 1 family. In terms of assembly, homotetramer. It depends on Mg(2+) as a cofactor.

The protein resides in the cytoplasm. It catalyses the reaction beta-D-fructose 1,6-bisphosphate + H2O = beta-D-fructose 6-phosphate + phosphate. It participates in carbohydrate biosynthesis; gluconeogenesis. This chain is Fructose-1,6-bisphosphatase class 1, found in Klebsiella pneumoniae (strain 342).